Reading from the N-terminus, the 1405-residue chain is DNA-directed RNA polymerase subunit beta' (1405 aa).

Zn(2+)-binding residues include C70, C72, C85, and C88. Residues D460, D462, and D464 each coordinate Mg(2+). 4 residues coordinate Zn(2+): C815, C889, C896, and C899. The tract at residues 1363-1388 (LAHHAERRRRREDPESTANPSAFDVE) is disordered.

This sequence belongs to the RNA polymerase beta' chain family. As to quaternary structure, the RNAP catalytic core consists of 2 alpha, 1 beta, 1 beta' and 1 omega subunit. When a sigma factor is associated with the core the holoenzyme is formed, which can initiate transcription. Requires Mg(2+) as cofactor. It depends on Zn(2+) as a cofactor.

The enzyme catalyses RNA(n) + a ribonucleoside 5'-triphosphate = RNA(n+1) + diphosphate. In terms of biological role, DNA-dependent RNA polymerase catalyzes the transcription of DNA into RNA using the four ribonucleoside triphosphates as substrates. This Chromohalobacter salexigens (strain ATCC BAA-138 / DSM 3043 / CIP 106854 / NCIMB 13768 / 1H11) protein is DNA-directed RNA polymerase subunit beta'.